Reading from the N-terminus, the 761-residue chain is 3'-5' RNA nuclease TATDN2 (761 aa).

Disordered regions lie at residues 1–90, 135–181, 197–294, 318–337, 343–364, and 388–486; these read MASE…HFLG, CSLK…LRDQ, KSMP…RRTV, KDRE…SDVE, RFSQ…SSFT, and SSPK…PKSH. Low complexity-rich tracts occupy residues 33 to 52 and 66 to 85; these read APSS…PSSP and SRRL…SSFS. Positions 247–294 are enriched in basic and acidic residues; the sequence is QKEKDATPEVSMEEDKTVPERSSFYDRRVVIDPQEKPSEEPLGDRRTV. A compositionally biased stretch (low complexity) spans 388–402; it reads SSPKPSSYPSTGSSS. The span at 417 to 431 shows a compositional bias: polar residues; sequence SDYSPNSTGSVQNTS. Basic and acidic residues predominate over residues 452-470; it reads RSSEEREVKEKRTFQEEMP. A divalent metal cation contacts are provided by His499, His501, Glu593, His630, His655, and Asp707.

Belongs to the metallo-dependent hydrolases superfamily. TatD-type hydrolase family. The cofactor is Mg(2+).

It localises to the nucleus. Mg(2+)-dependent 3'RNA exonuclease and endonuclease that resolves R-loops via specific degradation of R-loop RNA stucture. Shows no activity against D-loop and minimal activity against the RNA strand of an RNA-DNA hybrid duplex oligomer. Has no 3' or 5' exonuclease activity, no uracil glycosylase activity, and no 5' flap endonuclease activity on DNA substrates. May have a role in maintaining genomic stability through its role in R-loop resolution. The polypeptide is 3'-5' RNA nuclease TATDN2 (TATDN2) (Homo sapiens (Human)).